The primary structure comprises 244 residues: Sperm-egg fusion protein Juno (244 aa).

Residues 1–19 (MAQWWLILLGLWTVLPSLA) form the signal peptide. Disulfide bonds link Cys-27/Cys-55, Cys-47/Cys-95, Cys-56/Cys-99, Cys-79/Cys-166, Cys-86/Cys-137, Cys-126/Cys-200, Cys-130/Cys-180, and Cys-143/Cys-160. The segment at 62 to 81 (WEAHLDEPLLFNFSMTHCGL) is important for interaction with IZUMO1. The N-linked (GlcNAc...) asparagine glycan is linked to Asn-73. Positions 223-244 (SASAPQLSYSITAFSLCLLLHA) are excised as a propeptide.

This sequence belongs to the folate receptor family. In terms of assembly, monomer. Interacts with IZUMO1; the interaction is direct. IZUMO1 and IZUMO1R/JUNO form a complex with 1:1 stoichiometry. Interacts with FCRL3/MAIA; FCRL3/MAIA replaces IZUMO1R/JUNO as IZUMO1 receptor after sperm-egg adhesion, thereby permitting species-specific gamete fusion. Interacts with WDR54. Post-translationally, the protein is rapidly cleaved following fertilization, being only weakly detectable in zona-intact fertilized eggs at telophase II and undetectable at the pronuclear stage. Sheding is probably required to block to polyspermy and ensuring egg fusion with a single sperm. As to expression, expressed in the oocyte (at protein level).

Its subcellular location is the cell membrane. The protein resides in the cell projection. It is found in the microvillus membrane. In terms of biological role, receptor for IZUMO1 present at the cell surface of oocytes (oolemma), which is essential for species-specific gamete recognition and fertilization. The IZUMO1:IZUMO1R/JUNO interaction is a necessary adhesion event between sperm and egg that is required for fertilization but is not sufficient for cell fusion. The ligand-receptor interaction probably does not act as a membrane 'fusogen'. Does not bind folate. This is Sperm-egg fusion protein Juno (Izumo1r) from Rattus norvegicus (Rat).